Reading from the N-terminus, the 105-residue chain is UPF0145 protein jk0060 (105 aa).

It belongs to the UPF0145 family.

In Corynebacterium jeikeium (strain K411), this protein is UPF0145 protein jk0060.